Here is a 154-residue protein sequence, read N- to C-terminus: Ribonuclease HI (154 aa).

The RNase H type-1 domain occupies 1–142 (MQKQIEIFTD…CDQLAKAGAE (142 aa)). Mg(2+)-binding residues include aspartate 10, glutamate 48, aspartate 70, and aspartate 134.

The protein belongs to the RNase H family. In terms of assembly, monomer. Mg(2+) is required as a cofactor.

The protein localises to the cytoplasm. It carries out the reaction Endonucleolytic cleavage to 5'-phosphomonoester.. In terms of biological role, endonuclease that specifically degrades the RNA of RNA-DNA hybrids. The chain is Ribonuclease HI (rnhA) from Pasteurella multocida (strain Pm70).